Here is a 93-residue protein sequence, read N- to C-terminus: Acylphosphatase (93 aa).

An Acylphosphatase-like domain is found at 7–93 (RLTAWVHGRV…ADAIAGFTER (87 aa)). Active-site residues include Arg22 and Asn40.

Belongs to the acylphosphatase family.

The enzyme catalyses an acyl phosphate + H2O = a carboxylate + phosphate + H(+). This Mycolicibacterium vanbaalenii (strain DSM 7251 / JCM 13017 / BCRC 16820 / KCTC 9966 / NRRL B-24157 / PYR-1) (Mycobacterium vanbaalenii) protein is Acylphosphatase (acyP).